The chain runs to 125 residues: Protein MGF 360-9L (125 aa).

The protein belongs to the asfivirus MGF 360 family. In terms of assembly, interacts with host STAT1; this interaction mediates STAT1 degradation through apoptosis. Interacts with host STAT2; this interaction mediates STAT2 degradation through the proteasome.

It localises to the host cytoplasm. Plays a role in virus cell tropism, and may be required for efficient virus replication in macrophages. In addition, inhibits IFN-beta-induced IFN-stimulated genes (ISGs) transcription. Mechanistically, degrades host STAT1 and STAT2 through apoptosis and ubiquitin-proteasome pathways respectively. This African swine fever virus (strain Badajoz 1971 Vero-adapted) (Ba71V) protein is Protein MGF 360-9L.